Reading from the N-terminus, the 567-residue chain is Thiol:disulfide interchange protein DsbD (567 aa).

Residues 1-19 form the signal peptide; that stretch reads MAQRIFTLILLLCSTSAFA. 2 cysteine pairs are disulfide-bonded: Cys-122–Cys-128 and Cys-185–Cys-307. Helical transmembrane passes span 170–192, 212–234, 246–268, 297–319, 326–348, 358–380, and 387–409; these read ALWALLIGIGIAFTPCVLPMYPL, LAFIYVQGMALTYTALGLVVAAA, YVLIGLAIVFTLLALSMFGLFTL, GAIAGLICSPCTTAPLSAILLYI, WLGGGTLYLYALGMGLPLMLVTV, GPWMAHVKTAFGFVILALPVFLL, and AWGLRLWSLLGVAFFGWAFITSL. The 133-residue stretch at 435–567 folds into the Thioredoxin domain; the sequence is QDWAFGSPSA…FSAHLHDRQP (133 aa). Cysteines 482 and 485 form a disulfide.

This sequence belongs to the thioredoxin family. DsbD subfamily.

Its subcellular location is the cell inner membrane. It catalyses the reaction [protein]-dithiol + NAD(+) = [protein]-disulfide + NADH + H(+). It carries out the reaction [protein]-dithiol + NADP(+) = [protein]-disulfide + NADPH + H(+). Functionally, required to facilitate the formation of correct disulfide bonds in some periplasmic proteins and for the assembly of the periplasmic c-type cytochromes. Acts by transferring electrons from cytoplasmic thioredoxin to the periplasm. This transfer involves a cascade of disulfide bond formation and reduction steps. This is Thiol:disulfide interchange protein DsbD from Salmonella typhi.